The chain runs to 125 residues: Glycine cleavage system H protein (125 aa).

Positions 23–105 (VSTVGITEHA…FEGGWLFKVR (83 aa)) constitute a Lipoyl-binding domain. The residue at position 64 (K64) is an N6-lipoyllysine.

The protein belongs to the GcvH family. In terms of assembly, the glycine cleavage system is composed of four proteins: P, T, L and H. (R)-lipoate serves as cofactor.

Its function is as follows. The glycine cleavage system catalyzes the degradation of glycine. The H protein shuttles the methylamine group of glycine from the P protein to the T protein. In Streptomyces avermitilis (strain ATCC 31267 / DSM 46492 / JCM 5070 / NBRC 14893 / NCIMB 12804 / NRRL 8165 / MA-4680), this protein is Glycine cleavage system H protein.